We begin with the raw amino-acid sequence, 764 residues long: 5-methyltetrahydropteroyltriglutamate--homocysteine methyltransferase (764 aa).

Residues 16–19 and lysine 121 contribute to the 5-methyltetrahydropteroyltri-L-glutamate site; that span reads RELK. Residues 440–442 and glutamate 493 each bind L-homocysteine; that span reads IGS. L-methionine contacts are provided by residues 440–442 and glutamate 493; that span reads IGS. 5-methyltetrahydropteroyltri-L-glutamate-binding positions include 524–525 and tryptophan 570; that span reads RC. Residue aspartate 608 coordinates L-homocysteine. Aspartate 608 serves as a coordination point for L-methionine. Glutamate 614 contacts 5-methyltetrahydropteroyltri-L-glutamate. The Zn(2+) site is built by histidine 650, cysteine 652, and glutamate 674. Catalysis depends on histidine 703, which acts as the Proton donor. Cysteine 735 serves as a coordination point for Zn(2+).

This sequence belongs to the vitamin-B12 independent methionine synthase family. It depends on Zn(2+) as a cofactor.

The catalysed reaction is 5-methyltetrahydropteroyltri-L-glutamate + L-homocysteine = tetrahydropteroyltri-L-glutamate + L-methionine. It participates in amino-acid biosynthesis; L-methionine biosynthesis via de novo pathway; L-methionine from L-homocysteine (MetE route): step 1/1. Catalyzes the transfer of a methyl group from 5-methyltetrahydrofolate to homocysteine resulting in methionine formation. This Burkholderia cenocepacia (strain HI2424) protein is 5-methyltetrahydropteroyltriglutamate--homocysteine methyltransferase.